A 1145-amino-acid polypeptide reads, in one-letter code: DNA polymerase subunit gamma-1, mitochondrial (1145 aa).

The N-terminal 9 residues, 1–9 (MQFHLIRKY), are a transit peptide targeting the mitochondrion.

The protein belongs to the DNA polymerase type-A family. In terms of assembly, component of the DNA polymerase gamma complex consisting of two subunits: the catalytic subunit DNApol-gamma/DNApolG1 and the accessory subunit PolG2/DNApol-gamma35. It depends on Mg(2+) as a cofactor.

The protein resides in the mitochondrion. It catalyses the reaction DNA(n) + a 2'-deoxyribonucleoside 5'-triphosphate = DNA(n+1) + diphosphate. Its activity is regulated as follows. Stimulated by KCl, and inhibited by the small molecules o 2',3'-dideoxythymidine 5'-triphosphate (d2TTP) and N-ethylmaleimide (NEM). Functionally, as the catalytic component of the DNA polymerase gamma complex is involved in the replication of mitochondrial DNA (mtDNA). Has both 5'-3' DNA polymerase and a highly mispair-specific 3'-5' exonuclease activity. At the end of mtDNA replication DNA ends are ligated to produce a closed circular mtDNA molecule, its exonuclease activity is required for formation of these ligatable ends by preventing DNA synthesis from continuing past the 5'-end of downstream DNA into duplex DNA regions. Does not possess DNA primase activity, does not catalyze strand displacement synthesis and does not contain a 5'-3' exonuclease activity to catalyze nick translation. Important for promoting the elimination of paternal mitochondrial DNA during spermatogenesis, however its exact role in this function has not yet been identified and appears to be independent of its 3'-5'-exonuclease activity and only partially dependent on its DNA polymerase activity. This chain is DNA polymerase subunit gamma-1, mitochondrial, found in Drosophila melanogaster (Fruit fly).